A 1143-amino-acid polypeptide reads, in one-letter code: Condensin-2 complex subunit G2 (1143 aa).

S30 is modified (phosphoserine). One copy of the HEAT repeat lies at 460-498 (LLPALRYSLHDNSEKVRVAFVDMLLKIKAVRAAKFWKIC). Phosphothreonine is present on residues T805 and T1119.

In terms of assembly, component of the condensin-2 complex, which contains the SMC2 and SMC4 heterodimer, and 3 non SMC subunits that probably regulate the complex: NCAPH2, NCAPD3 and NCAPG2.

It is found in the nucleus. Regulatory subunit of the condensin-2 complex, a complex which establishes mitotic chromosome architecture and is involved in physical rigidity of the chromatid axis. The sequence is that of Condensin-2 complex subunit G2 (NCAPG2) from Homo sapiens (Human).